The sequence spans 403 residues: Fasciclin-like arabinogalactan protein 2 (403 aa).

Positions 1–26 (MAYLRRAATALVLIFQLHLFLSLSNA) are cleaved as a signal peptide. FAS1 domains follow at residues 27–174 (HNIT…SQVL) and 187–326 (SDLI…DKVL). Residues N28, N130, N164, and N248 are each glycosylated (N-linked (GlcNAc...) asparagine). Residues 338-371 (SAPAPKSSKKKPKNAEADADGPSADAPSDDDVEV) are disordered. A378 carries the GPI-anchor amidated alanine lipid modification. A propeptide spans 379–403 (VSAMITRTSNVVTAIVGLCFGVWLM) (removed in mature form).

Belongs to the fasciclin-like AGP family. Expressed mainly in flowers and to a lesser extent in leaves and roots.

The protein resides in the cell membrane. May be a cell surface adhesion protein. The chain is Fasciclin-like arabinogalactan protein 2 (FLA2) from Arabidopsis thaliana (Mouse-ear cress).